A 706-amino-acid polypeptide reads, in one-letter code: UvrABC system protein C (706 aa).

The region spanning 16–95 (VEPGVYRFRD…IKEFDPRFNV (80 aa)) is the GIY-YIG domain. The region spanning 208–243 (DRLAKDMEQQMTAAAEQLDFERAARLRDDISALKRA) is the UVR domain. Residues 651–706 (APQNGTAPDPAPGTGDPQTPADPHSAATAADIEDDRHATGATGPQMNGSEQQVDRV) are disordered. A compositionally biased stretch (polar residues) spans 692–706 (TGPQMNGSEQQVDRV).

The protein belongs to the UvrC family. As to quaternary structure, interacts with UvrB in an incision complex.

It is found in the cytoplasm. Its function is as follows. The UvrABC repair system catalyzes the recognition and processing of DNA lesions. UvrC both incises the 5' and 3' sides of the lesion. The N-terminal half is responsible for the 3' incision and the C-terminal half is responsible for the 5' incision. This is UvrABC system protein C from Mycolicibacterium smegmatis (strain ATCC 700084 / mc(2)155) (Mycobacterium smegmatis).